The sequence spans 274 residues: F-box protein SKIP5 (274 aa).

Positions 32 to 79 (LTSLNNLDDGCLMHILSFLSPIPDRYNTALVCHRWRYLACHPRLWLRV) constitute an F-box domain.

In terms of assembly, part of a SCF (SKP1-cullin-F-box) protein ligase complex. Interacts with SKP1A/ASK1.

It functions in the pathway protein modification; protein ubiquitination. The chain is F-box protein SKIP5 (SKIP5) from Arabidopsis thaliana (Mouse-ear cress).